The sequence spans 75 residues: Large ribosomal subunit protein bL32c (75 aa).

The tract at residues 49 to 75 (SPGPTTPIKPNPKKQTGRRPRSQRRRT) is disordered. Basic residues predominate over residues 59-75 (NPKKQTGRRPRSQRRRT).

It belongs to the bacterial ribosomal protein bL32 family.

The protein localises to the plastid. It localises to the chloroplast. The sequence is that of Large ribosomal subunit protein bL32c from Nephroselmis olivacea (Green alga).